The sequence spans 419 residues: Testin (419 aa).

Positions 92–199 (MILTNPVAAK…GDVKLPSEMN (108 aa)) constitute a PET domain. 2 disordered regions span residues 133 to 164 (EKQP…PSKC) and 199 to 222 (NAQG…GSKD). Over residues 155–164 (PAHDQDPSKC) the composition is skewed to basic and acidic residues. LIM zinc-binding domains lie at 232-295 (YSCY…CDSE), 297-357 (PRCA…NHAV), and 360-419 (QGCH…KMMS).

It belongs to the prickle / espinas / testin family. As to quaternary structure, interacts via LIM domain 1 with ZYX. Interacts (via LIM domain 3) with ENAH and VASP. Interacts with ALKBH4, talin, actin, alpha-actinin, GRIP1 and PXN. Interacts (via LIM domain 2) with ACTL7A (via N-terminus). Heterodimer with ACTL7A; the heterodimer interacts with ENAH to form a heterotrimer.

It is found in the cytoplasm. Its subcellular location is the cell junction. It localises to the focal adhesion. Functionally, scaffold protein that may play a role in cell adhesion, cell spreading and in the reorganization of the actin cytoskeleton. Plays a role in the regulation of cell proliferation. May act as a tumor suppressor. This Rattus norvegicus (Rat) protein is Testin (Tes).